Reading from the N-terminus, the 252-residue chain is Mitochondrial intermembrane space import and assembly protein 40 (252 aa).

Residues M1–P31 constitute a mitochondrion transit peptide. The Mitochondrial matrix segment spans residues S32–K37. A helical; Signal-anchor for type II membrane protein transmembrane segment spans residues L38–S54. The Mitochondrial intermembrane segment spans residues Q55–D252. Basic and acidic residues predominate over residues R90–S123. Residues R90–P143 form a disordered region. 3 cysteine pairs are disulfide-bonded: C152/C154, C163/C196, and C173/C186. In terms of domain architecture, CHCH spans H160–Y204. 2 consecutive short sequence motifs (cx9C motif) follow at residues C163–C173 and C186–C196. Residues E230–D252 form a disordered region. The span at G239–D252 shows a compositional bias: basic and acidic residues.

In terms of assembly, monomer. It depends on Cu(2+) as a cofactor. Requires Zn(2+) as cofactor.

The protein resides in the mitochondrion inner membrane. In terms of biological role, required for the import and folding of small cysteine-containing proteins (small Tim) in the mitochondrial intermembrane space (IMS). Forms a redox cycle with ERV1 that involves a disulfide relay system. Precursor proteins to be imported into the IMS are translocated in their reduced form into the mitochondria. The oxidized form of MIA40 forms a transient intermolecular disulfide bridge with the reduced precursor protein, resulting in oxidation of the precursor protein that now contains an intramolecular disulfide bond and is able to undergo folding in the IMS. This chain is Mitochondrial intermembrane space import and assembly protein 40 (MIA40), found in Candida albicans (strain SC5314 / ATCC MYA-2876) (Yeast).